Here is a 60-residue protein sequence, read N- to C-terminus: Cecropin-B (60 aa).

A signal peptide spans 1-25; that stretch reads MNFTKLFILVAIAVLVVVGVQPVDG. L59 is modified (leucine amide).

The protein belongs to the cecropin family.

The protein resides in the secreted. Functionally, cecropins have lytic and antibacterial activity against several Gram-positive and Gram-negative bacteria. The protein is Cecropin-B (CecB) of Anopheles gambiae (African malaria mosquito).